Consider the following 739-residue polypeptide: MPNMEPTTKEIKEQKIYQEMGLTDSEYELVCSILGREPNYTETGLFSVMWSEHCSYKNSKPVLRKFPTEGKQVLQGPGEGAGIVDIGDGLGVAFKVESHNHPSYVEPYQGAATGVGGIIRDVFSMGARPIAMLNSLRFGELDTPHAKYLVSEVVAGIAGYGNSIGIPTVGGEIQFDPCYTKNPLVNAMCVGLIEAKDIQKGQAKGIGNPVMYVGAKTGRDGIHGATFASVEFSEEGEQQRSAVQVGDPFMEKLLLEACLDVIRDHSDILVGIQDMGAAGLVSSSSEMASKAGAGLELIMDDVPQRELNMTPYEMLLSESQERMLLCVKKGHVEEIQALFERYGLEAVVIGQVTDDKMYKIIHHGEVVANVPVDALAEDAPVYHKPSKEPARYQAFQEEKAFVPAMDDVVGVWKELLAQPTIASKRHIYEQYDYQVRTDTAVVPGSDAAIVRVRGTEKAIAMTTDCNSRYLYLDPEVGGAIAVAEAARNIVCSGGKPLAITDGLNFGNPEKPEIFWEIEKAADGISAACLELDTPVISGNVSLYNETDGTGIYPTPVIGMVGLVEDLAHITTQDFKNSGDVIFLIGETKAEYSGSELQKLQQGKISGRAPELDLATEKKYQQLLLTAIQEGLVASSHDLAEGGFGVALAEATFKAGLGADVEVPFALNQLFSESQSRFLVSVKPENEAAFAQLMELEKVYRLGVVTEDDTIRVKHKEDQVTAKTTELRSIWEGAIPCLLK.

His-53 is a catalytic residue. ATP contacts are provided by Tyr-56 and Lys-95. A Mg(2+)-binding site is contributed by Glu-97. Residues Ser-98–His-101 and Arg-120 each bind substrate. Residue His-99 is the Proton acceptor of the active site. Asp-121 serves as a coordination point for Mg(2+). Residue Gln-244 participates in substrate binding. Residue Asp-274 coordinates Mg(2+). Glu-318–Gln-320 is a binding site for substrate. Positions 501 and 538 each coordinate ATP. Asn-539 provides a ligand contact to Mg(2+). Residue Ser-541 coordinates substrate.

This sequence belongs to the FGAMS family. Monomer. Part of the FGAM synthase complex composed of 1 PurL, 1 PurQ and 2 PurS subunits.

The protein resides in the cytoplasm. The catalysed reaction is N(2)-formyl-N(1)-(5-phospho-beta-D-ribosyl)glycinamide + L-glutamine + ATP + H2O = 2-formamido-N(1)-(5-O-phospho-beta-D-ribosyl)acetamidine + L-glutamate + ADP + phosphate + H(+). The protein operates within purine metabolism; IMP biosynthesis via de novo pathway; 5-amino-1-(5-phospho-D-ribosyl)imidazole from N(2)-formyl-N(1)-(5-phospho-D-ribosyl)glycinamide: step 1/2. Part of the phosphoribosylformylglycinamidine synthase complex involved in the purines biosynthetic pathway. Catalyzes the ATP-dependent conversion of formylglycinamide ribonucleotide (FGAR) and glutamine to yield formylglycinamidine ribonucleotide (FGAM) and glutamate. The FGAM synthase complex is composed of three subunits. PurQ produces an ammonia molecule by converting glutamine to glutamate. PurL transfers the ammonia molecule to FGAR to form FGAM in an ATP-dependent manner. PurS interacts with PurQ and PurL and is thought to assist in the transfer of the ammonia molecule from PurQ to PurL. The chain is Phosphoribosylformylglycinamidine synthase subunit PurL from Listeria monocytogenes serotype 4a (strain HCC23).